The primary structure comprises 165 residues: NADH-quinone oxidoreductase subunit I (165 aa).

4Fe-4S ferredoxin-type domains are found at residues 57–86 (RRYENGEERCIACKLCEAVCPALAITIESE) and 96–125 (TRYDIDLTKCIFCGFCEESCPVDSIVETHI). Residues cysteine 66, cysteine 69, cysteine 72, cysteine 76, cysteine 105, cysteine 108, cysteine 111, and cysteine 115 each contribute to the [4Fe-4S] cluster site.

The protein belongs to the complex I 23 kDa subunit family. NDH-1 is composed of 14 different subunits. Subunits NuoA, H, J, K, L, M, N constitute the membrane sector of the complex. Requires [4Fe-4S] cluster as cofactor.

Its subcellular location is the cell inner membrane. It carries out the reaction a quinone + NADH + 5 H(+)(in) = a quinol + NAD(+) + 4 H(+)(out). Functionally, NDH-1 shuttles electrons from NADH, via FMN and iron-sulfur (Fe-S) centers, to quinones in the respiratory chain. The immediate electron acceptor for the enzyme in this species is believed to be ubiquinone. Couples the redox reaction to proton translocation (for every two electrons transferred, four hydrogen ions are translocated across the cytoplasmic membrane), and thus conserves the redox energy in a proton gradient. The sequence is that of NADH-quinone oxidoreductase subunit I from Methylibium petroleiphilum (strain ATCC BAA-1232 / LMG 22953 / PM1).